We begin with the raw amino-acid sequence, 788 residues long: Probable phosphoketolase 1 (788 aa).

It belongs to the XFP family. Thiamine diphosphate serves as cofactor.

This chain is Probable phosphoketolase 1, found in Lactiplantibacillus plantarum (strain ATCC BAA-793 / NCIMB 8826 / WCFS1) (Lactobacillus plantarum).